Reading from the N-terminus, the 340-residue chain is Cysteinyl leukotriene receptor 1 (340 aa).

Residues 1–31 (MDGVRNLTVSCASSNTCNDTIDDFRNQVYST) lie on the Extracellular side of the membrane. N-linked (GlcNAc...) asparagine glycosylation is found at asparagine 6 and asparagine 18. A helical membrane pass occupies residues 32–52 (LYSMITVVGFFGNGFVLYVLI). Over 53 to 60 (KTYHEKSA) the chain is Cytoplasmic. Residues 61-81 (YQVYMINLAVADLLCVCTLPL) traverse the membrane as a helical segment. Residues 82 to 109 (RVVYYVHKGIWLFGDFLCRLSTYALYVN) lie on the Extracellular side of the membrane. A disulfide bridge connects residues cysteine 99 and cysteine 176. A helical transmembrane segment spans residues 110 to 130 (LYCSIFFMTAMSFFRCIAIVF). The Cytoplasmic segment spans residues 131–144 (PVQNINLITHKKAK). The helical transmembrane segment at 145-165 (IVCIAIWIFVILTSSPFLMST) threads the bilayer. Residues 166–196 (SYKDEKNNTKCFEPPQXNQAKYHVLVLHYVS) lie on the Extracellular side of the membrane. A glycan (N-linked (GlcNAc...) asparagine) is linked at asparagine 172. A helical membrane pass occupies residues 197 to 217 (LFVGFIIPFVIIIVCYTMIIL). Residues 218-233 (TLLKNSMKKNISSRKK) are Cytoplasmic-facing. Residues 234–254 (AIGMIIVVTAAFLISFMPYHI) form a helical membrane-spanning segment. The Extracellular portion of the chain corresponds to 255 to 279 (QRTIHLHFLHNDTKHCDSVLRMQKS). Asparagine 265 is a glycosylation site (N-linked (GlcNAc...) asparagine). Residues 280 to 300 (VXITLSLAASNCCFDPLLYFF) traverse the membrane as a helical segment. The Cytoplasmic portion of the chain corresponds to 301 to 340 (SGGNFREGLSTFRKHSLSTMTYVPKKKTSLPEKAQEIYKE).

This sequence belongs to the G-protein coupled receptor 1 family.

The protein localises to the cell membrane. Its function is as follows. Receptor for cysteinyl leukotrienes mediating constriction of the microvascular smooth muscle during an inflammatory response. This response is mediated via a G-protein that activates a phosphatidylinositol-calcium second messenger system. The polypeptide is Cysteinyl leukotriene receptor 1 (CYSLTR1) (Sus scrofa (Pig)).